We begin with the raw amino-acid sequence, 263 residues long: Indole-3-glycerol phosphate synthase (263 aa).

The protein belongs to the TrpC family.

It carries out the reaction 1-(2-carboxyphenylamino)-1-deoxy-D-ribulose 5-phosphate + H(+) = (1S,2R)-1-C-(indol-3-yl)glycerol 3-phosphate + CO2 + H2O. It participates in amino-acid biosynthesis; L-tryptophan biosynthesis; L-tryptophan from chorismate: step 4/5. The protein is Indole-3-glycerol phosphate synthase of Rhodospirillum rubrum (strain ATCC 11170 / ATH 1.1.1 / DSM 467 / LMG 4362 / NCIMB 8255 / S1).